Here is a 798-residue protein sequence, read N- to C-terminus: ATP-dependent RNA helicase bel (798 aa).

Residues valine 16–asparagine 248 are disordered. Residues proline 31–threonine 42 are compositionally biased toward polar residues. Composition is skewed to gly residues over residues arginine 94–glycine 110, tyrosine 118–glycine 132, and serine 154–glycine 178. Phosphoserine occurs at positions 177 and 179. Over residues arginine 198–alanine 209 the composition is skewed to basic and acidic residues. Phosphoserine occurs at positions 214 and 219. Positions threonine 295–lysine 323 match the Q motif motif. ATP is bound by residues tyrosine 315 to glutamine 322 and alanine 339 to threonine 346. In terms of domain architecture, Helicase ATP-binding spans isoleucine 326–leucine 515. The DEAD box signature appears at aspartate 459–aspartate 462. Residues tyrosine 542–serine 693 form the Helicase C-terminal domain. Serine 638 is subject to Phosphoserine. Disordered regions lie at residues methionine 689 to glycine 765 and glycine 778 to glutamine 798. Gly residues-rich tracts occupy residues arginine 706–glycine 717 and glycine 740–serine 750.

It belongs to the DEAD box helicase family. DDX3/DED1 subfamily. As to expression, vas and bel colocalize in nuage (perinuclear, electron-dense granules in germline cells) and at the oocyte posterior during oogenesis.

It localises to the cytoplasm. It catalyses the reaction ATP + H2O = ADP + phosphate + H(+). Its function is as follows. ATP-dependent RNA helicase that is essential and required for cellular function, larval growth, and for male and female fertility. Also required for RNA interference (RNAi), double-stranded RNA induces potent and specific gene silencing, by acting downstream of dsRNA internalization. RNAi is mediated by the RNA-induced silencing complex (RISC), a sequence-specific, multicomponent nuclease that destroys or silences messenger RNAs homologous to the silencing trigger. In Drosophila melanogaster (Fruit fly), this protein is ATP-dependent RNA helicase bel.